We begin with the raw amino-acid sequence, 519 residues long: MGVPRLGRFLEPFGKPVYFSSYPEVPLNCSLVIDGPSFAFWLWFSQGIVCSDFQGYQKAVLDFHHLLSRLRFKEIEYIFDGGLPFSKHQVRVNRYQQKINDLRSAYINLCVPIAQHVLMGLAKAKVIVCNEEADKYCAFQAKKLDAVILSQDSDFLLYDIDTPHYGYIPLQSLDVTSNGISGRKYRFDEIQKDFHFDLHILAAYLGVEGHPLDLVIDYHNTFEHICKILENSVKDKFIEKLVSKEELTRVHAFYSLNDLKLETSTINTFMWGRVQELLNSQLQPAEIWLPQLLELPSKHCSWLESAPLRLQAYANFSKQMPEFGTEVLEYFRLSDRLSKRLISVDYDYATVCETLDSKFSNWNLPHRLVLWTLRCMKNLNNITATSFLLMHVSLFLGSPMNLQPVEPTQEDIASVSRFIATIYSICMLIFSEDKEQSSISFQEFVSFSPLSSTLNFALFHQAASKLKTGKSPLSIVTDKTTASLTYKMYKDLTNDYSDIYMIMDIWKPKRKRKTKKDQS.

It belongs to the asteroid family.

Its subcellular location is the cytoplasm. The protein localises to the mitochondrion. This Schizosaccharomyces pombe (strain 972 / ATCC 24843) (Fission yeast) protein is Asteroid homolog 1 (ast1).